The following is a 512-amino-acid chain: Serine--tRNA ligase, cytoplasmic (512 aa).

The residue at position 1 (Met1) is an N-acetylmethionine. The interval 9 to 61 (RVDKGGDPALIRETQEKRFKDPGLVDQLVKADSEWRRCRFRADNLNKLKNLCS) is interaction with tRNA. The residue at position 241 (Ser241) is a Phosphoserine. Thr271 and Arg302 together coordinate L-serine. Residues 302–304 (RQE) and 318–321 (VHQF) contribute to the ATP site. Residue Lys323 is modified to N6-acetyllysine. Glu325 contributes to the L-serine binding site. 391–394 (ELVS) serves as a coordination point for ATP. L-serine contacts are provided by Asn427 and Thr429. The segment at 472–512 (KPAPIDQEPSKKQKKQHEGSKKKAKEVTLESQLQNMEVTEA) is disordered. Residues 479–499 (EPSKKQKKQHEGSKKKAKEVT) show a composition bias toward basic and acidic residues. The Nuclear localization signal signature appears at 482-494 (KKQKKQHEGSKKK). The span at 500–512 (LESQLQNMEVTEA) shows a compositional bias: polar residues.

The protein belongs to the class-II aminoacyl-tRNA synthetase family. Type-1 seryl-tRNA synthetase subfamily. In terms of assembly, homodimer. The tRNA molecule may bind across the dimer. Interacts with SIRT2. Interacts with METTL6; interaction is required for the tRNA N(3)-methylcytidine methyltransferase activity of METTL6.

Its subcellular location is the cytoplasm. It localises to the nucleus. The catalysed reaction is tRNA(Ser) + L-serine + ATP = L-seryl-tRNA(Ser) + AMP + diphosphate + H(+). The enzyme catalyses tRNA(Sec) + L-serine + ATP = L-seryl-tRNA(Sec) + AMP + diphosphate + H(+). It participates in aminoacyl-tRNA biosynthesis; selenocysteinyl-tRNA(Sec) biosynthesis; L-seryl-tRNA(Sec) from L-serine and tRNA(Sec): step 1/1. In terms of biological role, catalyzes the attachment of serine to tRNA(Ser) in a two-step reaction: serine is first activated by ATP to form Ser-AMP and then transferred to the acceptor end of tRNA(Ser). Is probably also able to aminoacylate tRNA(Sec) with serine, to form the misacylated tRNA L-seryl-tRNA(Sec), which will be further converted into selenocysteinyl-tRNA(Sec). In the nucleus, binds to the VEGFA core promoter and prevents MYC binding and transcriptional activation by MYC. Recruits SIRT2 to the VEGFA promoter, promoting deacetylation of histone H4 at 'Lys-16' (H4K16). Thereby, inhibits the production of VEGFA and sprouting angiogenesis mediated by VEGFA. This is Serine--tRNA ligase, cytoplasmic (SARS1) from Cricetulus griseus (Chinese hamster).